A 654-amino-acid polypeptide reads, in one-letter code: Smc-like protein Sph3 (654 aa).

2 coiled-coil regions span residues 135–290 (TDAI…LQTV) and 341–503 (IRGT…LTAA).

It belongs to the Sph1/Sph2 family.

Its function is as follows. Involved in cell-shape determination. Required for the formation of rods and wild-type-like motility. In Haloferax volcanii (strain ATCC 29605 / DSM 3757 / JCM 8879 / NBRC 14742 / NCIMB 2012 / VKM B-1768 / DS2) (Halobacterium volcanii), this protein is Smc-like protein Sph3.